The primary structure comprises 400 residues: D(3) dopamine receptor (400 aa).

The Extracellular segment spans residues 1 to 32 (MASLSQLSGHLNYTCGAENSTGASQARPHAYY). N-linked (GlcNAc...) asparagine glycosylation is found at Asn-12 and Asn-19. The helical transmembrane segment at 33–55 (ALSYCALILAIVFGNGLVCMAVL) threads the bilayer. Residues 56–65 (KERALQTTTN) lie on the Cytoplasmic side of the membrane. Residues 66–88 (YLVVSLAVADLLVATLVMPWVVY) form a helical membrane-spanning segment. Residues 89 to 104 (LEVTGGVWNFSRICCD) are Extracellular-facing. Residue Asn-97 is glycosylated (N-linked (GlcNAc...) asparagine). Cysteines 103 and 181 form a disulfide. Residues 105-126 (VFVTLDVMMCTASILNLCAISI) form a helical membrane-spanning segment. Asp-110 lines the eticlopride pocket. The Cytoplasmic segment spans residues 127 to 149 (DRYTAVVMPVHYQHGTGQSSCRR). A helical membrane pass occupies residues 150–170 (VALMITAVWVLAFAVSCPLLF). The Extracellular portion of the chain corresponds to 171 to 187 (GFNTTGDPTVCSISNPD). The N-linked (GlcNAc...) asparagine glycan is linked to Asn-173. Residues 188-209 (FVIYSSVVSFYLPFGVTVLVYA) form a helical membrane-spanning segment. Over 210–329 (RIYVVLKQRR…VPLREKKATQ (120 aa)) the chain is Cytoplasmic. The chain crosses the membrane as a helical span at residues 330–351 (MVAIVLGAFIVCWLPFFLTHVL). The eticlopride site is built by Phe-345 and His-349. The Extracellular segment spans residues 352-366 (NTHCQTCHVSPELYS). Cys-355 and Cys-358 form a disulfide bridge. Residues 367–386 (ATTWLGYVNSALNPVIYTTF) traverse the membrane as a helical segment. Over 387–400 (NIEFRKAFLKILSC) the chain is Cytoplasmic.

The protein belongs to the G-protein coupled receptor 1 family. As to quaternary structure, interacts with CLIC6. Interacts with GRK4. Interacts with PALM. Interacts with FLNA (via filamin repeat 21); increases PKA-mediated phosphorylation of FLNA. Post-translationally, phosphorylated by GRK4 (GRK4-alpha and GRK4-gamma). In terms of processing, palmitoylated. As to expression, brain.

It is found in the cell membrane. In terms of biological role, dopamine receptor whose activity is mediated by G proteins which inhibit adenylyl cyclase. Promotes cell proliferation. This Homo sapiens (Human) protein is D(3) dopamine receptor.